The following is a 100-amino-acid chain: Small ribosomal subunit protein uS14c (100 aa).

The protein belongs to the universal ribosomal protein uS14 family. In terms of assembly, component of the chloroplast small ribosomal subunit (SSU). Mature 70S chloroplast ribosomes of higher plants consist of a small (30S) and a large (50S) subunit. The 30S small subunit contains 1 molecule of ribosomal RNA (16S rRNA) and 24 different proteins. The 50S large subunit contains 3 rRNA molecules (23S, 5S and 4.5S rRNA) and 33 different proteins.

It localises to the plastid. Its subcellular location is the chloroplast. In terms of biological role, component of the chloroplast ribosome (chloro-ribosome), a dedicated translation machinery responsible for the synthesis of chloroplast genome-encoded proteins, including proteins of the transcription and translation machinery and components of the photosynthetic apparatus. The polypeptide is Small ribosomal subunit protein uS14c (Spinacia oleracea (Spinach)).